A 245-amino-acid chain; its full sequence is MNTELQPKLEKSAVNFQAKPRKQKIRKDPNAPFIREKLELPDGHNKLLLHSCCAPCSGEVMEAILASGIEFTIYFYNPNIHPLKEYLIRKEENIRFAKKFGIPFIDADYDRQNWFDRAKGMEWEPERGIRCTMCFDMRFEKAAEYAHKHGFPVFTSCLGISRWKDMNQINGCGHRAAEKYDDVIYWDYNWRKEGGSQRMIEISKRERFYQQEYCGCVYSLRDSNKWREETGRQKIEIGKLYYSAD.

Positions 52, 53, 131, and 134 each coordinate [4Fe-4S] cluster. Cysteine 214 and cysteine 216 are oxidised to a cystine.

It belongs to the QueH family.

It carries out the reaction epoxyqueuosine(34) in tRNA + AH2 = queuosine(34) in tRNA + A + H2O. It participates in tRNA modification; tRNA-queuosine biosynthesis. In terms of biological role, catalyzes the conversion of epoxyqueuosine (oQ) to queuosine (Q), which is a hypermodified base found in the wobble positions of tRNA(Asp), tRNA(Asn), tRNA(His) and tRNA(Tyr). The polypeptide is Epoxyqueuosine reductase QueH (Haemophilus influenzae (strain ATCC 51907 / DSM 11121 / KW20 / Rd)).